The following is a 648-amino-acid chain: Threonine--tRNA ligase (648 aa).

A TGS domain is found at 1 to 61; sequence MIDIILPDGS…INTATVKAIT (61 aa). The catalytic stretch occupies residues 243–549; the sequence is DHRKLGRELE…LIEHYSGKLP (307 aa). Residues cysteine 349, histidine 400, and histidine 526 each contribute to the Zn(2+) site.

Belongs to the class-II aminoacyl-tRNA synthetase family. In terms of assembly, homodimer. Zn(2+) is required as a cofactor.

It is found in the cytoplasm. The catalysed reaction is tRNA(Thr) + L-threonine + ATP = L-threonyl-tRNA(Thr) + AMP + diphosphate + H(+). Catalyzes the attachment of threonine to tRNA(Thr) in a two-step reaction: L-threonine is first activated by ATP to form Thr-AMP and then transferred to the acceptor end of tRNA(Thr). Also edits incorrectly charged L-seryl-tRNA(Thr). The polypeptide is Threonine--tRNA ligase (Orientia tsutsugamushi (strain Ikeda) (Rickettsia tsutsugamushi)).